We begin with the raw amino-acid sequence, 249 residues long: Putative S-adenosyl-L-methionine-dependent methyltransferase Mjls_0570 (249 aa).

Residues Asp111 and Asp141–Leu142 each bind S-adenosyl-L-methionine.

It belongs to the UPF0677 family.

Functionally, exhibits S-adenosyl-L-methionine-dependent methyltransferase activity. This chain is Putative S-adenosyl-L-methionine-dependent methyltransferase Mjls_0570, found in Mycobacterium sp. (strain JLS).